The primary structure comprises 248 residues: Ankyrin repeat domain-containing protein 45 (248 aa).

Composition is skewed to acidic residues over residues 1–10 (MEPEETLESE) and 22–33 (EYEESQEAEETG). The interval 1–42 (MEPEETLESESSEKSLFSSQQEYEESQEAEETGAENPLLQPT) is disordered. ANK repeat units lie at residues 75 to 104 (VGRN…NLNE) and 108 to 137 (RGYT…DIEA).

It is found in the cytoplasm. The protein localises to the midbody. Its subcellular location is the midbody ring. It localises to the cleavage furrow. May play a role during cell division. The polypeptide is Ankyrin repeat domain-containing protein 45 (Ankrd45) (Mus musculus (Mouse)).